The chain runs to 762 residues: 5-methyltetrahydropteroyltriglutamate--homocysteine methyltransferase (762 aa).

Residues 17–20 (REWK) and lysine 111 contribute to the 5-methyltetrahydropteroyltri-L-glutamate site. L-homocysteine is bound by residues 435 to 437 (IGS) and glutamate 488. L-methionine-binding positions include 435–437 (IGS) and glutamate 488. Residues 519-520 (RC) and tryptophan 565 each bind 5-methyltetrahydropteroyltri-L-glutamate. Aspartate 603 provides a ligand contact to L-homocysteine. Aspartate 603 serves as a coordination point for L-methionine. 5-methyltetrahydropteroyltri-L-glutamate is bound at residue glutamate 609. The Zn(2+) site is built by histidine 645, cysteine 647, and glutamate 669. The active-site Proton donor is histidine 698. Zn(2+) is bound at residue cysteine 730.

The protein belongs to the vitamin-B12 independent methionine synthase family. The cofactor is Zn(2+).

The enzyme catalyses 5-methyltetrahydropteroyltri-L-glutamate + L-homocysteine = tetrahydropteroyltri-L-glutamate + L-methionine. The protein operates within amino-acid biosynthesis; L-methionine biosynthesis via de novo pathway; L-methionine from L-homocysteine (MetE route): step 1/1. In terms of biological role, catalyzes the transfer of a methyl group from 5-methyltetrahydrofolate to homocysteine resulting in methionine formation. This Bacillus cytotoxicus (strain DSM 22905 / CIP 110041 / 391-98 / NVH 391-98) protein is 5-methyltetrahydropteroyltriglutamate--homocysteine methyltransferase.